A 220-amino-acid chain; its full sequence is Claudin-22 (220 aa).

Over Met1–Gln10 the chain is Cytoplasmic. Residues Leu11–Leu30 traverse the membrane as a helical segment. Residues Pro31 to Arg81 are Extracellular-facing. A helical membrane pass occupies residues Ile82–Leu102. The Cytoplasmic segment spans residues Asp103–Arg117. A helical transmembrane segment spans residues Leu118 to Ser138. The Extracellular portion of the chain corresponds to Trp139–Glu164. The helical transmembrane segment at Ala165–Cys185 threads the bilayer. The Cytoplasmic segment spans residues Ala186–His220.

The protein belongs to the claudin family.

Its subcellular location is the cell junction. The protein localises to the tight junction. It is found in the cell membrane. In terms of biological role, plays a major role in tight junction-specific obliteration of the intercellular space, through calcium-independent cell-adhesion activity. The protein is Claudin-22 (CLDN22) of Homo sapiens (Human).